Consider the following 71-residue polypeptide: Ceratotoxin-A (71 aa).

An N-terminal signal peptide occupies residues 1–23 (MANLKAVFLICIVAFIALQCVVA). 2 propeptides span residues 24 to 35 (EPAAEDSVVVKR) and 65 to 71 (VAAGLVG).

In terms of assembly, homomer of four to six subunits.

Its subcellular location is the secreted. Its function is as follows. Female-specific peptides with potent activity against Gram-positive and Gram-negative bacteria. They have as well hemolytic activity. The chain is Ceratotoxin-A (CTXA1) from Ceratitis capitata (Mediterranean fruit fly).